We begin with the raw amino-acid sequence, 141 residues long: Transcriptional regulator MraZ (141 aa).

SpoVT-AbrB domains follow at residues 5–47 (TFNL…KPAD) and 76–119 (ANLV…DKVQ).

The protein belongs to the MraZ family. As to quaternary structure, forms oligomers.

It is found in the cytoplasm. The protein resides in the nucleoid. This chain is Transcriptional regulator MraZ, found in Mycoplasma genitalium (strain ATCC 33530 / DSM 19775 / NCTC 10195 / G37) (Mycoplasmoides genitalium).